The following is a 373-amino-acid chain: 3 beta-hydroxysteroid dehydrogenase/Delta 5--&gt;4-isomerase type 2 (373 aa).

Tyr155 functions as the Proton acceptor in the catalytic mechanism. Lys159 serves as a coordination point for NAD(+). Residues 288–308 (VPLLYWLAFLLETVSFLLSPI) form a helical membrane-spanning segment.

This sequence belongs to the 3-beta-HSD family. In terms of tissue distribution, liver and kidney.

It localises to the endoplasmic reticulum membrane. The protein localises to the mitochondrion membrane. It catalyses the reaction a 3beta-hydroxy-Delta(5)-steroid + NAD(+) = a 3-oxo-Delta(5)-steroid + NADH + H(+). It carries out the reaction a 3-oxo-Delta(5)-steroid = a 3-oxo-Delta(4)-steroid. The enzyme catalyses pregnenolone + NAD(+) = pregn-5-ene-3,20-dione + NADH + H(+). The catalysed reaction is pregn-5-ene-3,20-dione = progesterone. It catalyses the reaction 3beta-hydroxyandrost-5-en-17-one + NAD(+) = androst-5-ene-3,17-dione + NADH + H(+). It carries out the reaction androst-5-ene-3,17-dione = androst-4-ene-3,17-dione. It participates in lipid metabolism; steroid biosynthesis. 3-beta-HSD is a bifunctional enzyme, that catalyzes the oxidative conversion of Delta(5)-ene-3-beta-hydroxy steroid, and the oxidative conversion of ketosteroids. The 3-beta-HSD enzymatic system plays a crucial role in the biosynthesis of all classes of hormonal steroids. In Mus musculus (Mouse), this protein is 3 beta-hydroxysteroid dehydrogenase/Delta 5--&gt;4-isomerase type 2.